Here is a 209-residue protein sequence, read N- to C-terminus: Yop proteins translocation protein K (209 aa).

Belongs to an operon involved in the translocation of Yop proteins across the bacterial membranes or in the specific control of this function. This chain is Yop proteins translocation protein K (yscK), found in Yersinia enterocolitica.